We begin with the raw amino-acid sequence, 325 residues long: Forkhead box protein B1 (325 aa).

A DNA-binding region (fork-head) is located at residues 12–103; it reads QKPPYSYISL…GDMFENGSFL (92 aa). Positions 284–309 are enriched in low complexity; the sequence is LSNSPPSLSPTSSQTATSQSSPATPS. The segment at 284–325 is disordered; it reads LSNSPPSLSPTSSQTATSQSSPATPSETLTSPASALHSVAVH.

In terms of tissue distribution, expressed widespread in the early developing ventricular zone of the neural tube and later restricted to areas of the spinal cord, hindbrain, thalamus and hypothalamus. Expressed in epithelial cells of developing and adult mammary glands.

Its subcellular location is the nucleus. Transcription factor expressed by neural progenitor cells in specific regions of the embryonic neuroepithelium. Essential for the mammillary nuclei maintenance. Negatively regulates the proliferation of oligodendrocyte progenitors and promotes oligodendrocyte maturation. Also expressed in mammary glands, plays a role in lactation, controls development of mammary glands and the inferior colliculi of the midbrain in the central nervous system that regulates the milk-ejection reflex. This chain is Forkhead box protein B1 (Foxb1), found in Mus musculus (Mouse).